Consider the following 191-residue polypeptide: Fe/S biogenesis protein NfuA (191 aa).

[4Fe-4S] cluster is bound by residues C149 and C152.

It belongs to the NfuA family. In terms of assembly, homodimer. Requires [4Fe-4S] cluster as cofactor.

In terms of biological role, involved in iron-sulfur cluster biogenesis. Binds a 4Fe-4S cluster, can transfer this cluster to apoproteins, and thereby intervenes in the maturation of Fe/S proteins. Could also act as a scaffold/chaperone for damaged Fe/S proteins. This chain is Fe/S biogenesis protein NfuA, found in Sodalis glossinidius (strain morsitans).